We begin with the raw amino-acid sequence, 358 residues long: Forkhead box protein I1c (358 aa).

The segment covering methionine 1–serine 13 has biased composition (polar residues). Disordered regions lie at residues methionine 1 to alanine 25 and aspartate 191 to isoleucine 255. Residues arginine 106–lysine 200 constitute a DNA-binding region (fork-head).

The protein resides in the nucleus. Its function is as follows. Probable transcription factor. This chain is Forkhead box protein I1c, found in Xenopus tropicalis (Western clawed frog).